A 581-amino-acid polypeptide reads, in one-letter code: Colicin-E2 (581 aa).

Disordered stretches follow at residues 1-74 (MSGG…SGGG), 242-269 (QTLSPGVTNNTDKDVRPAGFTQGGNTRD), 293-320 (PDQVKQRQDEENRRQQEWDATHPVEAAE), 421-488 (ADAA…IADK), and 513-566 (DLSK…MNNI). Gly residues predominate over residues 20–35 (INGGPTGLGVGGGASD). Residues 36-45 (GSGWSSENNP) show a composition bias toward low complexity. The segment covering 46–74 (WGGGSGSGIHWGGGSGHGNGGGNGNSGGG) has biased composition (gly residues). Polar residues predominate over residues 242-251 (QTLSPGVTNN). 3 stretches are compositionally biased toward basic and acidic residues: residues 296-320 (VKQRQDEENRRQQEWDATHPVEAAE), 429-452 (QERRKQKENKEKDAKDKLDKESKR), and 464-475 (PVGDKWLDDAGK). A compositionally biased stretch (polar residues) spans 518–527 (FKGSNKTNIQ). Residues 535-554 (RKKDQVGGRERFELHHDKPI) are compositionally biased toward basic and acidic residues. Zn(2+)-binding residues include histidine 549, histidine 574, and histidine 578.

Belongs to the colicin/pyosin nuclease family.

Functionally, this plasmid-coded bactericidal protein is an endonuclease active on both single- and double-stranded DNA but with undefined specificity. In terms of biological role, colicins are polypeptide toxins produced by and active against E.coli and closely related bacteria. The protein is Colicin-E2 (col) of Escherichia coli.